Here is a 147-residue protein sequence, read N- to C-terminus: Ubiquitin-like-conjugating enzyme ATG10 (147 aa).

Cys-116 serves as the catalytic Glycyl thioester intermediate.

It belongs to the ATG10 family. In terms of assembly, forms homooligomers. Interacts with ATG10. Interacts with ATG7 and ATG12.

The protein localises to the preautophagosomal structure membrane. In terms of biological role, E2-like enzyme required for the cytoplasm to vacuole transport (Cvt), autophagy and nucleophagy. Acts as an E2-like enzyme that catalyzes the conjugation of ATG12 to ATG5. ATG12 conjugation to ATG5 is required for proper localization of ATG8 to the preautophagosomal structure (PAS). Likely serves as an ATG5-recognition molecule. The sequence is that of Ubiquitin-like-conjugating enzyme ATG10 from Kluyveromyces marxianus (strain DMKU3-1042 / BCC 29191 / NBRC 104275) (Yeast).